Consider the following 579-residue polypeptide: Type IV pilus assembly ATPase PilB (579 aa).

An ATP-binding site is contributed by 340–345 (GSGKTV). Residues C470, C473, C507, and C510 each coordinate Zn(2+).

This sequence belongs to the GSP E family. In terms of assembly, interacts with CpiA.

It localises to the cytoplasm. Inhibited by the inhibitory protein CpiA. Its function is as follows. ATPase component of the type IV pilus (T4P). Acts as a molecular motor to provide the energy that is required for biogenesis of the pilus and the extrusion of substrates generated in the cytoplasm. PilB is required for optimal T4P extension and, consequently, efficient natural transformation. May promote processive T4P extension. The sequence is that of Type IV pilus assembly ATPase PilB from Acinetobacter baylyi (strain ATCC 33305 / BD413 / ADP1).